The following is a 152-amino-acid chain: MYRMQLLSCIALTLALVANGAPTSSSTENTKKQVQSLLQDLQLLLKEINNYENLKLFRMLTFKFYMPKKATELKHLQCLAEELKPLEDVLNVAQSKTQNSIDIKDLMDNINRIVLTLKGSETRFTCEYDEKTVTAVELLNKWITFCQSIIST.

An N-terminal signal peptide occupies residues 1–20 (MYRMQLLSCIALTLALVANG). O-linked (GalNAc...) threonine glycosylation occurs at Thr23. Cys78 and Cys126 are joined by a disulfide.

Belongs to the IL-2 family.

Its subcellular location is the secreted. Functionally, cytokine produced by activated CD4-positive helper T-cells and to a lesser extend activated CD8-positive T-cells and natural killer (NK) cells that plays pivotal roles in the immune response and tolerance. Binds to a receptor complex composed of either the high-affinity trimeric IL-2R (IL2RA/CD25, IL2RB/CD122 and IL2RG/CD132) or the low-affinity dimeric IL-2R (IL2RB and IL2RG). Interaction with the receptor leads to oligomerization and conformation changes in the IL-2R subunits resulting in downstream signaling starting with phosphorylation of JAK1 and JAK3. In turn, JAK1 and JAK3 phosphorylate the receptor to form a docking site leading to the phosphorylation of several substrates including STAT5. This process leads to activation of several pathways including STAT, phosphoinositide-3-kinase/PI3K and mitogen-activated protein kinase/MAPK pathways. Functions as a T-cell growth factor and can increase NK-cell cytolytic activity as well. Promotes strong proliferation of activated B-cells and subsequently immunoglobulin production. Plays a pivotal role in regulating the adaptive immune system by controlling the survival and proliferation of regulatory T-cells, which are required for the maintenance of immune tolerance. Moreover, participates in the differentiation and homeostasis of effector T-cell subsets, including Th1, Th2, Th17 as well as memory CD8-positive T-cells. This is Interleukin-2 (IL2) from Orcinus orca (Killer whale).